A 539-amino-acid polypeptide reads, in one-letter code: uncharacterized protein (539 aa).

The tract at residues 316 to 433 is disordered; that stretch reads AEHHHQKGKK…ATVERSSPPE (118 aa). A compositionally biased stretch (basic residues) spans 318 to 352; sequence HHHQKGKKVPATHRRSSTPHARKTAGTRARTRARK. Residues 362–384 show a composition bias toward basic and acidic residues; the sequence is KISKKDSGESKQKDETAGMERVF. Residues 390-402 are compositionally biased toward polar residues; the sequence is NVRTCSSRASRTG.

This is an uncharacterized protein from Treponema pallidum (strain Nichols).